We begin with the raw amino-acid sequence, 158 residues long: Na(+)/H(+) antiporter subunit E (158 aa).

Helical transmembrane passes span 21 to 41 (SPSA…LFFF) and 51 to 71 (LWKL…LYLA).

This sequence belongs to the CPA3 antiporters (TC 2.A.63) subunit E family. In terms of assembly, forms a heterooligomeric complex that consists of seven subunits: MrpA, MrpB, MrpC, MrpD, MrpE, MrpF and MrpG.

The protein resides in the cell membrane. In terms of biological role, mrp complex is a Na(+)/H(+) antiporter that is considered to be the major Na(+) excretion system in B.subtilis. Has a major role in Na(+) resistance and a minor role in Na(+)- and K(+)-dependent pH homeostasis as compared to TetB. MrpA may be the actual Na(+)/H(+) antiporter, although the six other Mrp proteins are all required for Na(+)/H(+) antiport activity and Na(+) resistance. MrpA is required for initiation of sporulation when external Na(+) concentration increases. Also transports Li(+) but not K(+), Ca(2+) or Mg(2+). The chain is Na(+)/H(+) antiporter subunit E (mrpE) from Bacillus subtilis (strain 168).